A 533-amino-acid polypeptide reads, in one-letter code: Acid-sensing ion channel 2 (533 aa).

Over residues 1-16 the composition is skewed to basic and acidic residues; it reads MDLKEACGSEASRETE. Residues 1–23 are disordered; it reads MDLKEACGSEASRETESGGMGSL. The Cytoplasmic segment spans residues 1–68; the sequence is MDLKEACGSE…STSRRLLWSA (68 aa). A helical membrane pass occupies residues 69 to 89; the sequence is ALLASLVLLVLESTERLAYFL. The Extracellular portion of the chain corresponds to 90–445; sequence SYPHVTSVDA…ETIEQKKAYE (356 aa). Cystine bridges form between cysteine 113–cysteine 214, cysteine 310–cysteine 385, cysteine 328–cysteine 381, cysteine 332–cysteine 379, cysteine 341–cysteine 363, and cysteine 343–cysteine 355. N-linked (GlcNAc...) asparagine glycosylation occurs at asparagine 163. 2 N-linked (GlcNAc...) asparagine glycosylation sites follow: asparagine 386 and asparagine 413. A helical membrane pass occupies residues 446 to 466; that stretch reads VAGLLGDIGGQMGLFIGASIL. Positions 462 to 464 match the GAS motif; ion selectivity filter motif; sequence GAS. Topologically, residues 467-533 are cytoplasmic; it reads TLLELFDYAY…TLGTLEEIAC (67 aa).

This sequence belongs to the amiloride-sensitive sodium channel (TC 1.A.6) family. ASIC2 subfamily. As to quaternary structure, can form homotrimers; probably non-functional. Heterotrimer; could form functional heterotrimers producing channel with specific properties depending on their composition. As to expression, expressed in central nervous system.

Its subcellular location is the cell membrane. It carries out the reaction Na(+)(in) = Na(+)(out). Inhibited by the diuretic drug amiloride. Functionally, could form pH-gated heterotrimeric sodium channels that act as postsynaptic excitatory sensors in the nervous system, generating rapid, transient inward currents that fully desensitize upon extracellular acidification. The polypeptide is Acid-sensing ion channel 2 (asic2) (Danio rerio (Zebrafish)).